Reading from the N-terminus, the 492-residue chain is MAKFIMVVGTSSNSGKTVLVSGICRMLSNKGYKVAPFKSQNMSLNSRVSVEDGEIAVAQYTQAMAARAEPSVHFNPILLKPKGNFVSQVIVHGNPYEDKDYNEYRSKKDDFLVKIKESIDYLDKNYDYVVIEGAGSCCEINLLNDDIANLKVAEIAGADAILVSDIDRGGVFASIYGTVQLLPENWKKLLKGFVINKFRGNIDVLKDGFEKIEELTNIPVIGTIPYDETLVLPEEDSQALDGKRVFGNLKSPIEVNVVKFSKIANFTDVDPFSSDCLMKYIDFNENITGDILILPGTRCSTVEMDLMKKYGMDKKILEFVENGGIVLGICGGYQALGKMLFDEDFSEGDVGTISGLGLFDMETTFGNKKAIKNSTGKISIFNQNFDVSGYELHEGYSVSNETPLISLSKGFGNCGDSYDGSFKMIGDSYIFGTYFHGILENFEFRNYLVNLARSKKNLSKIEDDTYAELFNENMDKLSKIIEENLDFSKIIG.

The region spanning 252–444 (PIEVNVVKFS…FHGILENFEF (193 aa)) is the GATase cobBQ-type domain. Cys330 functions as the Nucleophile in the catalytic mechanism. The active site involves His436.

It belongs to the CobB/CobQ family. CobQ subfamily.

It functions in the pathway cofactor biosynthesis; adenosylcobalamin biosynthesis. Its function is as follows. Catalyzes amidations at positions B, D, E, and G on adenosylcobyrinic A,C-diamide. NH(2) groups are provided by glutamine, and one molecule of ATP is hydrogenolyzed for each amidation. This chain is Probable cobyric acid synthase, found in Methanococcus maripaludis (strain DSM 14266 / JCM 13030 / NBRC 101832 / S2 / LL).